We begin with the raw amino-acid sequence, 279 residues long: Large ribosomal subunit protein uL2 (279 aa).

2 disordered regions span residues 32–58 and 223–279; these read SLLT…GGGH and GVAM…RKRG. Basic residues-rich tracts occupy residues 40-58 and 269-279; these read KGGR…GGGH and VRRRYATRKRG.

The protein belongs to the universal ribosomal protein uL2 family. As to quaternary structure, part of the 50S ribosomal subunit. Forms a bridge to the 30S subunit in the 70S ribosome.

Functionally, one of the primary rRNA binding proteins. Required for association of the 30S and 50S subunits to form the 70S ribosome, for tRNA binding and peptide bond formation. It has been suggested to have peptidyltransferase activity; this is somewhat controversial. Makes several contacts with the 16S rRNA in the 70S ribosome. This is Large ribosomal subunit protein uL2 from Salinispora tropica (strain ATCC BAA-916 / DSM 44818 / JCM 13857 / NBRC 105044 / CNB-440).